Reading from the N-terminus, the 332-residue chain is tRNA U34 carboxymethyltransferase (332 aa).

Carboxy-S-adenosyl-L-methionine contacts are provided by residues lysine 96, tryptophan 110, lysine 115, glycine 135, 186–187 (LE), methionine 204, tyrosine 208, and arginine 323.

This sequence belongs to the class I-like SAM-binding methyltransferase superfamily. CmoB family. As to quaternary structure, homotetramer.

The catalysed reaction is carboxy-S-adenosyl-L-methionine + 5-hydroxyuridine(34) in tRNA = 5-carboxymethoxyuridine(34) in tRNA + S-adenosyl-L-homocysteine + H(+). In terms of biological role, catalyzes carboxymethyl transfer from carboxy-S-adenosyl-L-methionine (Cx-SAM) to 5-hydroxyuridine (ho5U) to form 5-carboxymethoxyuridine (cmo5U) at position 34 in tRNAs. The sequence is that of tRNA U34 carboxymethyltransferase from Hydrogenovibrio crunogenus (strain DSM 25203 / XCL-2) (Thiomicrospira crunogena).